The following is a 166-amino-acid chain: Flagellar protein LafL (166 aa).

Residues 6–26 (MIAMFIAMIITSALVSAATIM) form a helical membrane-spanning segment.

Belongs to the FliL family.

Its subcellular location is the cell inner membrane. Functionally, controls the rotational direction of flagella during chemotaxis. This Vibrio parahaemolyticus serotype O3:K6 (strain RIMD 2210633) protein is Flagellar protein LafL (lafL).